The primary structure comprises 1124 residues: Regulator of nonsense transcripts 1 (1124 aa).

The interval 1–410 (MSVEAYGPSS…LRSSVGAPVE (410 aa)) is sufficient for interaction with RENT2. 2 positions are modified to phosphoserine: S10 and S31. Positions 39 to 69 (TLPSQTQTPPGGPGGAGGPGGAGAGGAAGQL) are disordered. Residues 51 to 66 (PGGAGGPGGAGAGGAA) show a composition bias toward gly residues. One can recognise a Upf1 CH-rich domain in the interval 110–267 (TKDLPVHACS…NKLEELWKEN (158 aa)). C118, C121, C132, S135, C140, H150, H154, C160, C178, C181, C204, and C208 together coordinate Zn(2+). Residues 118-150 (CSYCGIHDPACVVYCNTSKKWFCNGRGNTSGSH) are C3H. A CC/SHH/C region spans residues 132–160 (CNTSKKWFCNGRGNTSGSHIVNHLVRAKC). The segment at 178–208 (CYNCGCRNVFLLGFIPAKADSVVVLLCRQPC) is C4. ATP-binding positions include Q481 and 501-505 (GTGKT). Residue S560 is modified to Phosphoserine. Residues Q671, Y708, and E839 each coordinate ATP. S951 carries the post-translational modification Phosphoserine. Disordered stretches follow at residues 1004–1053 (FGQA…VASQ) and 1066–1091 (SMSQ…YLGD). Residue R1014 is modified to Omega-N-methylarginine. Positions 1020–1029 (KTGRGGRQKN) are enriched in basic residues. Over residues 1036–1053 (PSQTTLPNSQASQDVASQ) the composition is skewed to polar residues. Residues 1066-1081 (SMSQPSQMSQPGLSQP) show a composition bias toward low complexity. Phosphoserine is present on residues S1084, S1102, S1105, and S1122. Short sequence motifs ([ST]-Q motif) lie at residues 1084–1085 (SQ) and 1102–1103 (SQ). The tract at residues 1105–1124 (STYQGERAYQHGGVTGLSQY) is disordered.

This sequence belongs to the DNA2/NAM7 helicase family. In terms of assembly, found in a post-splicing messenger ribonucleoprotein (mRNP) complex. Associates with the exon junction complex (EJC). Associates with the SGM1C complex; is phosphorylated by the complex kinase component SGM1. Part of a complex composed of SMG1, DHX34 and UPF1; within the complex DHX34 acts as a scaffolding protein to facilitate SMG1 phosphorylation of UPF1. Interacts with UPF2. Interacts with UPF3A and UPF3B. Interacts with EST1A. Interacts with SLBP. Interacts (when hyperphosphorylated) with PNRC2. Interacts with AGO1 and AGO2. Interacts with GSPT2. Interacts with isoform 1 and isoform 5 of ADAR/ADAR1. Interacts with SMG7. Interacts with ZC3H12A; this interaction occurs in a mRNA translationally active- and termination-dependent manner and is essential for ZC3H12A-mediated degradation of target mRNAs. Interacts with CPSF6. Interacts with MOV10; the interaction is direct and RNA-dependent. Interacts with SHFL; the interaction increases in the presence of RNA. Interacts with UPF2 and DDX4; interactions are mediated by TDRD6. Interacts with DHX34 and PABPC1/PABP1; the interactions are RNA-independent. Interacts with RBM46. Post-translationally, phosphorylated by SMG1; required for formation of mRNA surveillance complexes. Localizes in male germ cells.

The protein localises to the cytoplasm. Its subcellular location is the P-body. It localises to the nucleus. It is found in the perinuclear region. It catalyses the reaction ATP + H2O = ADP + phosphate + H(+). Functionally, RNA-dependent helicase required for nonsense-mediated decay (NMD) of aberrant mRNAs containing premature stop codons and modulates the expression level of normal mRNAs. Is recruited to mRNAs upon translation termination and undergoes a cycle of phosphorylation and dephosphorylation; its phosphorylation appears to be a key step in NMD. Recruited by release factors to stalled ribosomes together with the SMG1C protein kinase complex to form the transient SURF (SMG1-UPF1-eRF1-eRF3) complex. In EJC-dependent NMD, the SURF complex associates with the exon junction complex (EJC) (located 50-55 or more nucleotides downstream from the termination codon) through UPF2 and allows the formation of an UPF1-UPF2-UPF3 surveillance complex which is believed to activate NMD. Phosphorylated UPF1 is recognized by EST1B/SMG5, SMG6 and SMG7 which are thought to provide a link to the mRNA degradation machinery involving exonucleolytic and endonucleolytic pathways, and to serve as adapters to protein phosphatase 2A (PP2A), thereby triggering UPF1 dephosphorylation and allowing the recycling of NMD factors. UPF1 can also activate NMD without UPF2 or UPF3, and in the absence of the NMD-enhancing downstream EJC indicative for alternative NMD pathways. Plays a role in replication-dependent histone mRNA degradation at the end of phase S; the function is independent of UPF2. For the recognition of premature termination codons (PTC) and initiation of NMD a competitive interaction between UPF1 and PABPC1 with the ribosome-bound release factors is proposed. The ATPase activity of UPF1 is required for disassembly of mRNPs undergoing NMD. Together with UPF2 and dependent on TDRD6, mediates the degradation of mRNA harboring long 3'UTR by inducing the NMD machinery. Also capable of unwinding double-stranded DNA and translocating on single-stranded DNA. The protein is Regulator of nonsense transcripts 1 of Mus musculus (Mouse).